Consider the following 385-residue polypeptide: Acetate kinase (385 aa).

Residue Asn-9 participates in Mg(2+) binding. Lys-16 provides a ligand contact to ATP. Arg-75 lines the substrate pocket. Asp-132 acts as the Proton donor/acceptor in catalysis. Residues 192–196, 266–268, and 314–318 each bind ATP; these read HLGNG, DFR, and GIGEN. Glu-368 contacts Mg(2+).

The protein belongs to the acetokinase family. As to quaternary structure, homodimer. Mg(2+) serves as cofactor. The cofactor is Mn(2+).

It localises to the cytoplasm. It carries out the reaction acetate + ATP = acetyl phosphate + ADP. The protein operates within metabolic intermediate biosynthesis; acetyl-CoA biosynthesis; acetyl-CoA from acetate: step 1/2. In terms of biological role, catalyzes the formation of acetyl phosphate from acetate and ATP. Can also catalyze the reverse reaction. The polypeptide is Acetate kinase (Mycobacterium bovis (strain ATCC BAA-935 / AF2122/97)).